The chain runs to 481 residues: 1-acylglycerol-3-phosphate O-acyltransferase PNPLA3 (481 aa).

At 1–41 (MYDAERGWSLSFAGCGFLGFYHVGATRCLSEHAPHLLRDAR) the chain is on the cytoplasmic side. Residues 10-179 (LSFAGCGFLG…SDNVPFIDAK (170 aa)) enclose the PNPLA domain. The GXGXXG signature appears at 14–19 (GCGFLG). A helical; Signal-anchor for type II membrane protein membrane pass occupies residues 42–62 (MLFGASAGALHCVGVLSGIPL). The GXSXG motif lies at 45 to 49 (GASAG). The active-site Nucleophile is Ser47. Residues 63-481 (EQTLQVLSDL…FPSFSLEKSL (419 aa)) lie on the Lumenal side of the membrane. N-linked (GlcNAc...) asparagine glycosylation occurs at Asn89. Asp166 functions as the Proton acceptor in the catalytic mechanism. Residues 166–168 (DGG) carry the DGA/G motif. An N-linked (GlcNAc...) asparagine glycan is attached at Asn280.

The protein localises to the membrane. Its subcellular location is the lipid droplet. The catalysed reaction is a 1-acyl-sn-glycero-3-phosphate + an acyl-CoA = a 1,2-diacyl-sn-glycero-3-phosphate + CoA. The enzyme catalyses a triacylglycerol + H2O = a diacylglycerol + a fatty acid + H(+). It carries out the reaction a 1-acylglycerol + a 1,3-diacylglycerol = a triacylglycerol + glycerol. It catalyses the reaction a 1-acylglycerol + a 1,2-diacylglycerol = a triacylglycerol + glycerol. The catalysed reaction is 2 a 1-acylglycerol = a 1,2-diacylglycerol + glycerol. The enzyme catalyses 1-(9Z-octadecenoyl)-sn-glycero-3-phosphate + (9Z)-octadecenoyl-CoA = 1,2-di-(9Z-octadecenoyl)-sn-glycero-3-phosphate + CoA. It carries out the reaction 1-(9Z-octadecenoyl)-sn-glycero-3-phosphate + hexadecanoyl-CoA = 1-(9Z)-octadecenoyl-2-hexadecanoyl-sn-glycero-3-phosphate + CoA. It catalyses the reaction 1-(9Z-octadecenoyl)-sn-glycero-3-phosphate + (9Z,12Z)-octadecadienoyl-CoA = 1-(9Z)-octadecenoyl-2-(9Z,12Z)-octadecadienoyl-sn-glycero-3-phosphate + CoA. The catalysed reaction is 1-(9Z-octadecenoyl)-sn-glycero-3-phosphate + (5Z,8Z,11Z,14Z)-eicosatetraenoyl-CoA = 1-(9Z)-octadecenoyl-2-(5Z,8Z,11Z,14Z)-eicosatetraenoyl-sn-glycero-3-phosphate + CoA. The enzyme catalyses 2 1-(9Z-octadecenoyl)-glycerol = 1,2-di-(9Z-octadecenoyl)-glycerol + glycerol. It carries out the reaction 1-(9Z-octadecenoyl)-glycerol + 1,2-di-(9Z-octadecenoyl)-glycerol = 1,2,3-tri-(9Z-octadecenoyl)-glycerol + glycerol. It catalyses the reaction 1-(9Z-octadecenoyl)-glycerol + 1,3-di-(9Z-octadecenoyl)-glycerol = 1,2,3-tri-(9Z-octadecenoyl)-glycerol + glycerol. The catalysed reaction is 1,2,3-tri-(9Z-octadecenoyl)-glycerol + H2O = 1,3-di-(9Z-octadecenoyl)-glycerol + (9Z)-octadecenoate + H(+). The enzyme catalyses a 1,2-diacyl-sn-glycero-3-phosphocholine + H2O = a 1-acyl-sn-glycero-3-phosphocholine + a fatty acid + H(+). The protein operates within phospholipid metabolism. It functions in the pathway glycerolipid metabolism. The triglyceride lipase activity is inhibited by BEL ((E)-6-(bromomethylene)-3-(1-naphthalenyl)-2H-tetrahydropyran-2-one), a suicide substrate inhibitor. In terms of biological role, specifically catalyzes coenzyme A (CoA)-dependent acylation of 1-acyl-sn-glycerol 3-phosphate (2-lysophosphatidic acid/LPA) to generate phosphatidic acid (PA), an important metabolic intermediate and precursor for both triglycerides and glycerophospholipids. Does not esterify other lysophospholipids. Acyl donors are long chain (at least C16) fatty acyl-CoAs: arachidonoyl-CoA, linoleoyl-CoA, oleoyl-CoA and at a lesser extent palmitoyl-CoA. Additionally possesses low triacylglycerol lipase and CoA-independent acylglycerol transacylase activities and thus may play a role in acyl-chain remodeling of triglycerides. In vitro may express hydrolytic activity against glycerolipids triacylglycerol, diacylglycerol and monoacylglycerol, with a strong preference for oleic acid as the acyl moiety. However, the triacylglycerol hydrolase activity is controversial and may be very low. Possesses phospholipase A2 activity. This Homo sapiens (Human) protein is 1-acylglycerol-3-phosphate O-acyltransferase PNPLA3.